Reading from the N-terminus, the 282-residue chain is Shikimate kinase (282 aa).

Residue 86 to 96 (PIKSGLSSSSA) participates in ATP binding.

This sequence belongs to the GHMP kinase family. Archaeal shikimate kinase subfamily.

It is found in the cytoplasm. The catalysed reaction is shikimate + ATP = 3-phosphoshikimate + ADP + H(+). It participates in metabolic intermediate biosynthesis; chorismate biosynthesis; chorismate from D-erythrose 4-phosphate and phosphoenolpyruvate: step 5/7. The protein is Shikimate kinase (aroK) of Methanocaldococcus jannaschii (strain ATCC 43067 / DSM 2661 / JAL-1 / JCM 10045 / NBRC 100440) (Methanococcus jannaschii).